The sequence spans 443 residues: Glycerol-3-phosphate acyltransferase 3-like (443 aa).

A run of 3 helical transmembrane segments spans residues Trp15–Ile35, Ile146–Leu166, and Ile170–Leu190. Positions His238–Asp243 match the HXXXXD motif motif. A helical transmembrane segment spans residues Ile358 to Leu378.

This sequence belongs to the 1-acyl-sn-glycerol-3-phosphate acyltransferase family.

It is found in the endoplasmic reticulum membrane. The catalysed reaction is sn-glycerol 3-phosphate + an acyl-CoA = a 1-acyl-sn-glycero-3-phosphate + CoA. It carries out the reaction a 1-acyl-sn-glycero-3-phosphate + an acyl-CoA = a 1,2-diacyl-sn-glycero-3-phosphate + CoA. It participates in glycerolipid metabolism; triacylglycerol biosynthesis. The protein operates within phospholipid metabolism; CDP-diacylglycerol biosynthesis; CDP-diacylglycerol from sn-glycerol 3-phosphate: step 1/3. Functionally, may transfer the acyl-group from acyl-coA to the sn-1 position of glycerol-3-phosphate, an essential step in glycerolipid biosynthesis. Also transfers the acyl-group from acyl-coA to the sn-2 position of 1-acyl-sn-glycerol-3-phosphate (lysophosphatidic acid, or LPA), forming 1,2-diacyl-sn-glycerol-3-phosphate (phosphatidic acid, or PA). In Danio rerio (Zebrafish), this protein is Glycerol-3-phosphate acyltransferase 3-like (agpat9l).